The sequence spans 99 residues: MVPRIVNPLDEMLFKEVLKEQQRIKVYIERARYGKVKTIIEGIDEKEFDLEEIAKKLKAKLACGGTAKNGRIELQGDHRDRIKKLLAELGFSEELIEVE.

This sequence belongs to the SUI1 family.

The sequence is that of Protein translation factor SUI1 homolog from Pyrococcus horikoshii (strain ATCC 700860 / DSM 12428 / JCM 9974 / NBRC 100139 / OT-3).